We begin with the raw amino-acid sequence, 619 residues long: Vitamin B12 transporter BtuB (619 aa).

A signal peptide spans methionine 1 to alanine 25. A TonB box motif is present at residues aspartate 31–serine 38. The region spanning proline 43–threonine 157 is the TBDR plug domain. Residues leucine 88, serine 90, and isoleucine 115 to serine 116 contribute to the cyanocob(III)alamin site. Residues lysine 160–phenylalanine 619 enclose the TBDR beta-barrel domain. The next 3 membrane-spanning stretches (beta stranded) occupy residues threonine 163–glycine 170, tyrosine 174–glutamine 183, and threonine 189–threonine 200. Ca(2+) is bound by residues aspartate 204, glutamine 216, aspartate 218, and aspartate 220. 2 beta stranded membrane passes run phenylalanine 222–aspartate 232 and glutamate 237–serine 253. Tyrosine 254 and aspartate 255 together coordinate Ca(2+). Alanine 256 provides a ligand contact to cyanocob(III)alamin. Residue aspartate 268 participates in Ca(2+) binding. 17 beta stranded membrane passes run arginine 270 to asparagine 284, glycine 286 to asparagine 303, serine 316 to glutamine 332, glutamine 335 to phenylalanine 344, lysine 360 to lysine 376, phenylalanine 378 to lysine 388, alanine 392 to isoleucine 407, tyrosine 410 to threonine 424, glutamate 441 to glutamate 450, leucine 456 to asparagine 465, tyrosine 478 to isoleucine 495, methionine 499 to serine 514, arginine 522 to tryptophan 534, aspartate 540 to phenylalanine 556, arginine 563 to serine 577, isoleucine 590 to valine 601, and proline 607 to phenylalanine 619. Serine 316 is a cyanocob(III)alamin binding site. Residue arginine 522 coordinates cyanocob(III)alamin. The short motif at tyrosine 602–phenylalanine 619 is the TonB C-terminal box element.

The protein belongs to the TonB-dependent receptor family. BtuB (TC 1.B.14.3.1) subfamily.

Its subcellular location is the cell outer membrane. Functionally, involved in the active translocation of vitamin B12 (cyanocobalamin) across the outer membrane to the periplasmic space. It derives its energy for transport by interacting with the trans-periplasmic membrane protein TonB. In Photorhabdus laumondii subsp. laumondii (strain DSM 15139 / CIP 105565 / TT01) (Photorhabdus luminescens subsp. laumondii), this protein is Vitamin B12 transporter BtuB.